A 109-amino-acid polypeptide reads, in one-letter code: ATP synthase subunit c (109 aa).

2 helical membrane passes run 42 to 62 (YIGT…QGFS) and 88 to 108 (LALA…IIFV).

This sequence belongs to the ATPase C chain family. F-type ATPases have 2 components, F(1) - the catalytic core - and F(0) - the membrane proton channel. F(1) has five subunits: alpha(3), beta(3), gamma(1), delta(1), epsilon(1). F(0) has three main subunits: a(1), b(2) and c(10-14). The alpha and beta chains form an alternating ring which encloses part of the gamma chain. F(1) is attached to F(0) by a central stalk formed by the gamma and epsilon chains, while a peripheral stalk is formed by the delta and b chains.

It localises to the cell membrane. Functionally, f(1)F(0) ATP synthase produces ATP from ADP in the presence of a proton or sodium gradient. F-type ATPases consist of two structural domains, F(1) containing the extramembraneous catalytic core and F(0) containing the membrane proton channel, linked together by a central stalk and a peripheral stalk. During catalysis, ATP synthesis in the catalytic domain of F(1) is coupled via a rotary mechanism of the central stalk subunits to proton translocation. In terms of biological role, key component of the F(0) channel; it plays a direct role in translocation across the membrane. A homomeric c-ring of between 10-14 subunits forms the central stalk rotor element with the F(1) delta and epsilon subunits. The polypeptide is ATP synthase subunit c (Ureaplasma urealyticum serovar 10 (strain ATCC 33699 / Western)).